The chain runs to 110 residues: UPF0060 membrane protein MT2717 (110 aa).

4 helical membrane-spanning segments follow: residues 6 to 26, 32 to 52, 61 to 81, and 90 to 110; these read ILLF…VWQG, GWLW…FATL, VLAA…MALD, and VIGA…PRGH.

The protein belongs to the UPF0060 family.

The protein localises to the cell membrane. The sequence is that of UPF0060 membrane protein MT2717 from Mycobacterium tuberculosis (strain CDC 1551 / Oshkosh).